The primary structure comprises 345 residues: MLNLIKLPQVFTINQVPKVFHEDGIISGYRHPCSSAKDCVLSLFQLTNETLNIWTHFLPTWFFLWKLLTVVLVLEDWRDPFIWPFLVFLLSCCVYPLASSCAHTFSTMSERARHICFFFDYGALSFYSLGSAIIYSSYSFPDKWVNGTFHLNYVSIAVVNSIISTALACYSRLGLPFLEYNCHSIKRPSGKLDQKLCKCLRIIAFVYPYLFDNIPLFYRIFVCAGEGCTVNEANTVHYQHTSLAFFTGFLFATHLPERLAPGSFDYIGHSHQLFHVFAIIGTYFQMTAIELDMAARKQWLHAHLPPVTFLNTVGAAFFSVVSGLCIVYVFSLSLFSTRGVKNKSF.

At 1–52 the chain is on the cytoplasmic side; sequence MLNLIKLPQVFTINQVPKVFHEDGIISGYRHPCSSAKDCVLSLFQLTNETLN. Residues 53–73 traverse the membrane as a helical segment; that stretch reads IWTHFLPTWFFLWKLLTVVLV. Residues 74–80 are Extracellular-facing; the sequence is LEDWRDP. Residues 81–101 traverse the membrane as a helical segment; sequence FIWPFLVFLLSCCVYPLASSC. Topologically, residues 102-114 are cytoplasmic; that stretch reads AHTFSTMSERARH. The chain crosses the membrane as a helical span at residues 115-135; the sequence is ICFFFDYGALSFYSLGSAIIY. Residues 136-148 are Extracellular-facing; sequence SSYSFPDKWVNGT. A helical transmembrane segment spans residues 149–169; the sequence is FHLNYVSIAVVNSIISTALAC. At 170-201 the chain is on the cytoplasmic side; that stretch reads YSRLGLPFLEYNCHSIKRPSGKLDQKLCKCLR. Residues 202 to 222 traverse the membrane as a helical segment; that stretch reads IIAFVYPYLFDNIPLFYRIFV. Topologically, residues 223 to 272 are extracellular; it reads CAGEGCTVNEANTVHYQHTSLAFFTGFLFATHLPERLAPGSFDYIGHSHQ. A helical transmembrane segment spans residues 273–293; that stretch reads LFHVFAIIGTYFQMTAIELDM. Residues 294-314 lie on the Cytoplasmic side of the membrane; it reads AARKQWLHAHLPPVTFLNTVG. A helical membrane pass occupies residues 315–335; that stretch reads AAFFSVVSGLCIVYVFSLSLF. Over 336–345 the chain is Extracellular; that stretch reads STRGVKNKSF.

This sequence belongs to the ADIPOR family.

It localises to the membrane. Functionally, steroid membrane receptor. Binds progesterone. May be involved in oocyte maturation. The protein is Membrane progestin receptor gamma-A (paqr5a) of Danio rerio (Zebrafish).